The sequence spans 268 residues: tRNA (guanine-N(1)-)-methyltransferase (268 aa).

S-adenosyl-L-methionine is bound by residues Gly113 and Ile133–Leu138. A disordered region spans residues Arg238 to Arg268.

This sequence belongs to the RNA methyltransferase TrmD family. In terms of assembly, homodimer.

The protein resides in the cytoplasm. It carries out the reaction guanosine(37) in tRNA + S-adenosyl-L-methionine = N(1)-methylguanosine(37) in tRNA + S-adenosyl-L-homocysteine + H(+). In terms of biological role, specifically methylates guanosine-37 in various tRNAs. This Thermomicrobium roseum (strain ATCC 27502 / DSM 5159 / P-2) protein is tRNA (guanine-N(1)-)-methyltransferase.